We begin with the raw amino-acid sequence, 599 residues long: MTTQVPPSALLPLNPEQLARLQAATTDLTPTQLAWVSGYFWGVLNQQPAALAATPAPAAEMPGITIISASQTGNARRVAEALRDDLLTAKLNVKLVNAGDYKFKQIASEKLLIVVTSTQGEGEPPEEAVALHKFLFSKKAPKLENIAFAVFSLGDSSYEFFCQSGKDFDSKLAELGGERLLDRVDADVEYQTAASEWRARVVDALKSRAPVAAPSQSVATGAVNEIHTSPYSKDAPLVASLSVNQKITGRNSEKDVRHIEIDLGDSDLRYQPGDALGVWYQNDPALVTELVELLWLKGDEPVTVEGKTLPLNEALQWHFELTVNTANIVENYATLTRSETLLPLVGEKAKLQHYAATTPIVDMVRFSPAQLDAEALINLLRPLTPRLYSIASSQAEVENEVHVTVGVVRYDVEGRTRAGGASSFLADRVEEEGEVRVFIEHNDNFRLPANPETPVIMIGPGTGIAPFRAFMQQRAADEAPGKNWLFFGNPHFTEDFLYQVEWQRYVKEGVLTRIDLAWSRDQKEKVYVQDKLREQGAELWRWINDGAHIYVCGDANRMAKDVEQALLEVIAEFGGMDTEAADEFLSELRVERRYQRDVY.

A Flavodoxin-like domain is found at 64–202 (ITIISASQTG…AASEWRARVV (139 aa)). FMN-binding positions include 70–75 (SQTGNA), 117–120 (STQG), and 153–162 (LGDSSYEFFC). The FAD-binding FR-type domain occupies 234–448 (DAPLVASLSV…IEHNDNFRLP (215 aa)). FAD-binding positions include T322, A356, 386-389 (RLYS), 404-406 (TVG), Y410, and 419-422 (GGAS). Residues 519 to 520 (SR), 525 to 529 (KVYVQ), and D561 contribute to the NADP(+) site. Y599 contributes to the FAD binding site.

This sequence belongs to the NADPH-dependent sulphite reductase flavoprotein subunit CysJ family. The protein in the N-terminal section; belongs to the flavodoxin family. It in the C-terminal section; belongs to the flavoprotein pyridine nucleotide cytochrome reductase family. In terms of assembly, alpha(8)-beta(8). The alpha component is a flavoprotein, the beta component is a hemoprotein. FAD serves as cofactor. It depends on FMN as a cofactor.

The enzyme catalyses hydrogen sulfide + 3 NADP(+) + 3 H2O = sulfite + 3 NADPH + 4 H(+). It participates in sulfur metabolism; hydrogen sulfide biosynthesis; hydrogen sulfide from sulfite (NADPH route): step 1/1. Functionally, component of the sulfite reductase complex that catalyzes the 6-electron reduction of sulfite to sulfide. This is one of several activities required for the biosynthesis of L-cysteine from sulfate. The flavoprotein component catalyzes the electron flow from NADPH -&gt; FAD -&gt; FMN to the hemoprotein component. This chain is Sulfite reductase [NADPH] flavoprotein alpha-component, found in Shigella dysenteriae serotype 1 (strain Sd197).